The following is a 124-amino-acid chain: Fluoride-specific ion channel FluC (124 aa).

4 helical membrane passes run 5 to 25 (ILAVSIAGIAGTLLRFATGTW), 38 to 58 (TLAVNIVGCLIIGVLYGLFLL), 69 to 89 (GLIVGFVGGLTTFSSFSLDTL), and 99 to 119 (LALGYAGISVFGGLLATWAGL). Na(+) contacts are provided by Gly-76 and Thr-79.

The protein belongs to the fluoride channel Fluc/FEX (TC 1.A.43) family.

It localises to the cell inner membrane. The catalysed reaction is fluoride(in) = fluoride(out). Na(+) is not transported, but it plays an essential structural role and its presence is essential for fluoride channel function. Its function is as follows. Fluoride-specific ion channel. Important for reducing fluoride concentration in the cell, thus reducing its toxicity. The polypeptide is Fluoride-specific ion channel FluC (Pseudomonas syringae pv. syringae (strain B728a)).